Here is an 804-residue protein sequence, read N- to C-terminus: DNA gyrase subunit B (804 aa).

A Toprim domain is found at 431–546; that stretch reads CEMYIVEGDS…NGCVYIAQPP (116 aa). Mg(2+)-binding residues include glutamate 437, aspartate 511, and aspartate 513.

It belongs to the type II topoisomerase GyrB family. As to quaternary structure, heterotetramer, composed of two GyrA and two GyrB chains. In the heterotetramer, GyrA contains the active site tyrosine that forms a transient covalent intermediate with DNA, while GyrB binds cofactors and catalyzes ATP hydrolysis. The cofactor is Mg(2+). It depends on Mn(2+) as a cofactor. Ca(2+) is required as a cofactor.

It is found in the cytoplasm. The catalysed reaction is ATP-dependent breakage, passage and rejoining of double-stranded DNA.. Its function is as follows. A type II topoisomerase that negatively supercoils closed circular double-stranded (ds) DNA in an ATP-dependent manner to modulate DNA topology and maintain chromosomes in an underwound state. Negative supercoiling favors strand separation, and DNA replication, transcription, recombination and repair, all of which involve strand separation. Also able to catalyze the interconversion of other topological isomers of dsDNA rings, including catenanes and knotted rings. Type II topoisomerases break and join 2 DNA strands simultaneously in an ATP-dependent manner. In Chlamydia muridarum (strain MoPn / Nigg), this protein is DNA gyrase subunit B.